The primary structure comprises 438 residues: Probable trafficking protein particle complex subunit 13 homolog (438 aa).

Belongs to the TRAPPC13 family.

The sequence is that of Probable trafficking protein particle complex subunit 13 homolog from Drosophila melanogaster (Fruit fly).